Reading from the N-terminus, the 166-residue chain is Protein C2-DOMAIN ABA-RELATED 11 (166 aa).

M1 bears the N-acetylmethionine mark. Residues M1–V103 enclose the C2 domain. G2 is modified (N-acetylglycine; in Protein C2-DOMAIN ABA-RELATED 11, N-terminally processed). Ca(2+) contacts are provided by R21, D22, D27, D73, K74, D75, and D81.

It belongs to the plant CAR protein family. In terms of assembly, binds to PYR/PYL/RCAR abscisic acid intracellular receptors in an ABA-independent manner, both at the plasma membrane and in the nucleus.

The protein resides in the cell membrane. It is found in the nucleus. Its function is as follows. Stimulates the GTPase/ATPase activities of Obg-like ATPases. Mediates the transient calcium-dependent interaction of PYR/PYL/RCAR abscisic acid (ABA) receptors with the plasma membrane and thus regulates ABA sensitivity. The chain is Protein C2-DOMAIN ABA-RELATED 11 from Arabidopsis thaliana (Mouse-ear cress).